Consider the following 265-residue polypeptide: Exosome complex component Rrp4 (265 aa).

In terms of domain architecture, S1 motif spans 65 to 137; that stretch reads GDNVIGKIVD…EVNNIDLTTK (73 aa). In terms of domain architecture, KH spans 147–205; it reads KGGQIVKITPSRVPRVIGRGGSMINMIKKLTMTRIIVGQNGWIWVSGKNDALEKLAIEA. The disordered stretch occupies residues 241–265; the sequence is EIPKLEEEPQGEDEVNGNDGEARGA.

Belongs to the RRP4 family. Component of the archaeal exosome complex. Forms a trimer of Rrp4 and/or Csl4 subunits. The trimer associates with a hexameric ring-like arrangement composed of 3 Rrp41-Rrp42 heterodimers.

The protein resides in the cytoplasm. Functionally, non-catalytic component of the exosome, which is a complex involved in RNA degradation. Increases the RNA binding and the efficiency of RNA degradation. Confers strong poly(A) specificity to the exosome. The protein is Exosome complex component Rrp4 of Pyrococcus abyssi (strain GE5 / Orsay).